We begin with the raw amino-acid sequence, 118 residues long: Acidic phospholipase A2 CM-I (118 aa).

Cystine bridges form between Cys-11/Cys-70, Cys-26/Cys-117, Cys-28/Cys-44, Cys-43/Cys-98, Cys-50/Cys-91, Cys-59/Cys-84, and Cys-77/Cys-89. Ca(2+)-binding residues include Tyr-27, Gly-29, and Gly-31. His-47 is a catalytic residue. Asp-48 serves as a coordination point for Ca(2+). Asp-92 is an active-site residue.

Belongs to the phospholipase A2 family. Group I subfamily. D49 sub-subfamily. Ca(2+) is required as a cofactor. In terms of tissue distribution, expressed by the venom gland.

It is found in the secreted. The catalysed reaction is a 1,2-diacyl-sn-glycero-3-phosphocholine + H2O = a 1-acyl-sn-glycero-3-phosphocholine + a fatty acid + H(+). In terms of biological role, snake venom phospholipase A2 (PLA2) that causes myonecrosis when injected intramuscularly, shows indirect hemolytic activity, abolishes twitches evoked by indirect stimulation earlier than those by direct stimulation (in the mouse phrenic nerve-diaphragm preparation) but does not produce complete neuromuscular block (up to 30 ug/ml) (in the chick biventer cervicis nerve-muscle preparation). PLA2 catalyzes the calcium-dependent hydrolysis of the 2-acyl groups in 3-sn-phosphoglycerides. This chain is Acidic phospholipase A2 CM-I, found in Naja mossambica (Mozambique spitting cobra).